Reading from the N-terminus, the 117-residue chain is UPF0295 protein YgzB (117 aa).

A run of 2 helical transmembrane segments spans residues 13–33 and 41–61; these read TFALSLVFVGFIIMYIGIFFK and LFMILGLLSIGLSTVVYFWIG.

This sequence belongs to the UPF0295 family.

Its subcellular location is the cell membrane. This Bacillus subtilis (strain 168) protein is UPF0295 protein YgzB (ygzB).